The following is a 430-amino-acid chain: Probable folylpolyglutamate synthase (430 aa).

37-40 provides a ligand contact to ATP; sequence GKET. E132 lines the Mg(2+) pocket. ATP is bound at residue D300.

The protein belongs to the folylpolyglutamate synthase family.

The protein resides in the mitochondrion. It carries out the reaction (6S)-5,6,7,8-tetrahydrofolyl-(gamma-L-Glu)(n) + L-glutamate + ATP = (6S)-5,6,7,8-tetrahydrofolyl-(gamma-L-Glu)(n+1) + ADP + phosphate + H(+). The protein operates within cofactor biosynthesis; tetrahydrofolylpolyglutamate biosynthesis. In terms of biological role, conversion of folates to polyglutamate derivatives. This is Probable folylpolyglutamate synthase (RMA1) from Saccharomyces cerevisiae (strain ATCC 204508 / S288c) (Baker's yeast).